Reading from the N-terminus, the 210-residue chain is Probable nicotinate-nucleotide adenylyltransferase (210 aa).

It belongs to the NadD family.

It carries out the reaction nicotinate beta-D-ribonucleotide + ATP + H(+) = deamido-NAD(+) + diphosphate. It participates in cofactor biosynthesis; NAD(+) biosynthesis; deamido-NAD(+) from nicotinate D-ribonucleotide: step 1/1. Functionally, catalyzes the reversible adenylation of nicotinate mononucleotide (NaMN) to nicotinic acid adenine dinucleotide (NaAD). This Streptococcus mutans serotype c (strain ATCC 700610 / UA159) protein is Probable nicotinate-nucleotide adenylyltransferase.